The chain runs to 382 residues: 1-deoxy-D-xylulose 5-phosphate reductoisomerase (382 aa).

Residues threonine 11, glycine 12, serine 13, isoleucine 14, and asparagine 123 each coordinate NADPH. Lysine 124 contacts 1-deoxy-D-xylulose 5-phosphate. Position 125 (glutamate 125) interacts with NADPH. Aspartate 149 serves as a coordination point for Mn(2+). 1-deoxy-D-xylulose 5-phosphate contacts are provided by serine 150, glutamate 151, serine 173, and histidine 196. Glutamate 151 provides a ligand contact to Mn(2+). Glycine 202 provides a ligand contact to NADPH. 4 residues coordinate 1-deoxy-D-xylulose 5-phosphate: serine 209, asparagine 214, lysine 215, and glutamate 218. Glutamate 218 contributes to the Mn(2+) binding site.

This sequence belongs to the DXR family. Mg(2+) serves as cofactor. Requires Mn(2+) as cofactor.

The catalysed reaction is 2-C-methyl-D-erythritol 4-phosphate + NADP(+) = 1-deoxy-D-xylulose 5-phosphate + NADPH + H(+). It participates in isoprenoid biosynthesis; isopentenyl diphosphate biosynthesis via DXP pathway; isopentenyl diphosphate from 1-deoxy-D-xylulose 5-phosphate: step 1/6. Its function is as follows. Catalyzes the NADPH-dependent rearrangement and reduction of 1-deoxy-D-xylulose-5-phosphate (DXP) to 2-C-methyl-D-erythritol 4-phosphate (MEP). The polypeptide is 1-deoxy-D-xylulose 5-phosphate reductoisomerase (Phocaeicola vulgatus (strain ATCC 8482 / DSM 1447 / JCM 5826 / CCUG 4940 / NBRC 14291 / NCTC 11154) (Bacteroides vulgatus)).